Here is a 122-residue protein sequence, read N- to C-terminus: MANQEQIIEAIKEMSVLELNDLVKAIEEEFGVTAAAPVAAAGAAAGGDAEAEKTDFDVELTSAGSSKIKVVKAVKEATGLGLKDAKELVDGAPKVIKEALPKEEAEKLKEALEEVGATVELK.

It belongs to the bacterial ribosomal protein bL12 family. As to quaternary structure, homodimer. Part of the ribosomal stalk of the 50S ribosomal subunit. Forms a multimeric L10(L12)X complex, where L10 forms an elongated spine to which 2 to 4 L12 dimers bind in a sequential fashion. Binds GTP-bound translation factors.

Its function is as follows. Forms part of the ribosomal stalk which helps the ribosome interact with GTP-bound translation factors. Is thus essential for accurate translation. The protein is Large ribosomal subunit protein bL12 of Staphylococcus saprophyticus subsp. saprophyticus (strain ATCC 15305 / DSM 20229 / NCIMB 8711 / NCTC 7292 / S-41).